A 111-amino-acid chain; its full sequence is MASAVLSASRVSGLLGRALPRVGRPMSSGAHGEEGSARIWKALTYFVALPGVGVSMLNVFLKSRHEEHERPEFVAYPHLRIRTKPFPWGDGNHTLFHNPHMNPLPTGYEDE.

Residues M1 to M26 constitute a mitochondrion transit peptide. The Mitochondrial matrix portion of the chain corresponds to S27–S36. The chain crosses the membrane as a helical span at residues A37–L61. Topologically, residues K62–E111 are mitochondrial intermembrane.

The protein belongs to the cytochrome c oxidase subunit 6A family. In terms of assembly, component of the cytochrome c oxidase (complex IV, CIV), a multisubunit enzyme composed of 14 subunits. The complex is composed of a catalytic core of 3 subunits MT-CO1, MT-CO2 and MT-CO3, encoded in the mitochondrial DNA, and 11 supernumerary subunits COX4I, COX5A, COX5B, COX6A, COX6B, COX6C, COX7A, COX7B, COX7C, COX8 and NDUFA4, which are encoded in the nuclear genome. The complex exists as a monomer or a dimer and forms supercomplexes (SCs) in the inner mitochondrial membrane with NADH-ubiquinone oxidoreductase (complex I, CI) and ubiquinol-cytochrome c oxidoreductase (cytochrome b-c1 complex, complex III, CIII), resulting in different assemblies (supercomplex SCI(1)III(2)IV(1) and megacomplex MCI(2)III(2)IV(2)).

The protein localises to the mitochondrion inner membrane. It functions in the pathway energy metabolism; oxidative phosphorylation. In terms of biological role, component of the cytochrome c oxidase, the last enzyme in the mitochondrial electron transport chain which drives oxidative phosphorylation. The respiratory chain contains 3 multisubunit complexes succinate dehydrogenase (complex II, CII), ubiquinol-cytochrome c oxidoreductase (cytochrome b-c1 complex, complex III, CIII) and cytochrome c oxidase (complex IV, CIV), that cooperate to transfer electrons derived from NADH and succinate to molecular oxygen, creating an electrochemical gradient over the inner membrane that drives transmembrane transport and the ATP synthase. Cytochrome c oxidase is the component of the respiratory chain that catalyzes the reduction of oxygen to water. Electrons originating from reduced cytochrome c in the intermembrane space (IMS) are transferred via the dinuclear copper A center (CU(A)) of subunit 2 and heme A of subunit 1 to the active site in subunit 1, a binuclear center (BNC) formed by heme A3 and copper B (CU(B)). The BNC reduces molecular oxygen to 2 water molecules unsing 4 electrons from cytochrome c in the IMS and 4 protons from the mitochondrial matrix. This is Cytochrome c oxidase subunit 6A1, mitochondrial (Cox6a1) from Rattus norvegicus (Rat).